The chain runs to 308 residues: Porphobilinogen deaminase (308 aa).

C241 bears the S-(dipyrrolylmethanemethyl)cysteine mark.

Belongs to the HMBS family. As to quaternary structure, monomer. Dipyrromethane serves as cofactor.

The enzyme catalyses 4 porphobilinogen + H2O = hydroxymethylbilane + 4 NH4(+). It functions in the pathway porphyrin-containing compound metabolism; protoporphyrin-IX biosynthesis; coproporphyrinogen-III from 5-aminolevulinate: step 2/4. Tetrapolymerization of the monopyrrole PBG into the hydroxymethylbilane pre-uroporphyrinogen in several discrete steps. The sequence is that of Porphobilinogen deaminase from Staphylococcus aureus (strain Newman).